Here is a 60-residue protein sequence, read N- to C-terminus: Ixodegrin-Ip (60 aa).

The first 21 residues, 1–21, serve as a signal peptide directing secretion; it reads MNAAFIAALFILGALTLDAMA. A Cell attachment site motif is present at residues 49–51; that stretch reads RGD.

It belongs to the ixodegrin family. Post-translationally, contains 3 disulfide bonds. Expressed in salivary glands.

The protein localises to the secreted. Its function is as follows. Tick salivary platelet aggregation inhibitor that plays an important part in the anti-hemostatic strategy of ticks. Inhibits platelet aggregation induced by ADP, thrombin and thromboxane A2 (TXA2). Blocks platelet adhesion to soluble collagen (most probably through the binding to alpha-2/beta-1 integrin (ITGA2/ITGB1)) and binds to purified glycoprotein IIb/IIIa (ITGA2B/ITGB3) in a dose-dependent manner. In vivo, reduces thrombus weight effectively in a rat arteriovenous shunt model and inhibits thrombosis in a carrageenan-induced mouse tail thrombosis model. In Ixodes pacificus (Western black-legged tick), this protein is Ixodegrin-Ip.